The sequence spans 208 residues: Ribonuclease HII (208 aa).

The RNase H type-2 domain maps to 11–203; sequence GPVAGVDEAG…VAAAHEQWLK (193 aa). The a divalent metal cation site is built by Asp-17, Glu-18, and Asp-112.

It belongs to the RNase HII family. Requires Mn(2+) as cofactor. Mg(2+) serves as cofactor.

It is found in the cytoplasm. It carries out the reaction Endonucleolytic cleavage to 5'-phosphomonoester.. Functionally, endonuclease that specifically degrades the RNA of RNA-DNA hybrids. The polypeptide is Ribonuclease HII (Corynebacterium jeikeium (strain K411)).